We begin with the raw amino-acid sequence, 343 residues long: Sorbitol dehydrogenase (343 aa).

A disordered region spans residues 1–26 (MKALVKTQHGTGHFAVQEKPEPTPGK). Cys-39, His-60, and Glu-61 together coordinate Zn(2+). Glu-146 lines the substrate pocket. Residues Ile-174, Arg-200, and 262-264 (VGL) each bind NAD(+).

The protein belongs to the zinc-containing alcohol dehydrogenase family. In terms of assembly, homotetramer. Zn(2+) serves as cofactor.

It catalyses the reaction keto-D-fructose + NADH + H(+) = D-sorbitol + NAD(+). The enzyme catalyses xylitol + NAD(+) = D-xylulose + NADH + H(+). It carries out the reaction L-iditol + NAD(+) = keto-L-sorbose + NADH + H(+). In terms of biological role, polyol dehydrogenase that catalyzes the NAD(+)-dependent oxidation of various sugar alcohols. Is active with D-sorbitol (D-glucitol), xylitol and L-iditol as substrates, leading to the C2-oxidized products D-fructose, D-xylulose and L-sorbose, respectively. The polypeptide is Sorbitol dehydrogenase (gutB) (Halalkalibacterium halodurans (strain ATCC BAA-125 / DSM 18197 / FERM 7344 / JCM 9153 / C-125) (Bacillus halodurans)).